The chain runs to 825 residues: AMP deaminase 2 (825 aa).

The interval 1-49 (MASYPSGSGKPKAKYPFKKRASLQASTAAPEARGGLGAPPLQSARSLPG) is disordered. Over residues 11 to 21 (PKAKYPFKKRA) the composition is skewed to basic residues. S22 carries the phosphoserine modification. R45 carries the omega-N-methylarginine modification. Residues S46, S64, and S80 each carry the phosphoserine modification. A Phosphotyrosine modification is found at Y91. Phosphoserine occurs at positions 97 and 114. Residue T134 is modified to Phosphothreonine. 2 positions are modified to phosphoserine: S136 and S138. Residues H364 and H366 each contribute to the Zn(2+) site. Substrate is bound by residues H366 and 435-440 (KFNAKY). H633 is a binding site for Zn(2+). Position 636 (E636) interacts with substrate. The active-site Proton acceptor is H655. Residue D710 participates in Zn(2+) binding. A substrate-binding site is contributed by 711–714 (DPLQ).

This sequence belongs to the metallo-dependent hydrolases superfamily. Adenosine and AMP deaminases family. In terms of assembly, homotetramer. Zn(2+) is required as a cofactor. As to expression, highly expressed in cerebellum.

It carries out the reaction AMP + H2O + H(+) = IMP + NH4(+). It functions in the pathway purine metabolism; IMP biosynthesis via salvage pathway; IMP from AMP: step 1/1. AMP deaminase plays a critical role in energy metabolism. Catalyzes the deamination of AMP to IMP and plays an important role in the purine nucleotide cycle. The polypeptide is AMP deaminase 2 (Homo sapiens (Human)).